A 576-amino-acid chain; its full sequence is DM7 family protein GD16138 (576 aa).

The tract at residues 454 to 481 (FPELEPDSEPEPEPEPQTEDEGEDEGDK) is disordered. The span at 457 to 478 (LEPDSEPEPEPEPQTEDEGEDE) shows a compositional bias: acidic residues.

This sequence belongs to the DM7 family.

This is DM7 family protein GD16138 from Drosophila simulans (Fruit fly).